Reading from the N-terminus, the 379-residue chain is Homoserine O-acetyltransferase (379 aa).

Residues 52-356 enclose the AB hydrolase-1 domain; that stretch reads NVVMVLHALT…IRGHDGFLVE (305 aa). S157 serves as the catalytic Nucleophile. R227 is a binding site for substrate. Active-site residues include D320 and H350. D351 serves as a coordination point for substrate.

This sequence belongs to the AB hydrolase superfamily. MetX family. In terms of assembly, homodimer.

It is found in the cytoplasm. The catalysed reaction is L-homoserine + acetyl-CoA = O-acetyl-L-homoserine + CoA. It functions in the pathway amino-acid biosynthesis; L-methionine biosynthesis via de novo pathway; O-acetyl-L-homoserine from L-homoserine: step 1/1. Transfers an acetyl group from acetyl-CoA to L-homoserine, forming acetyl-L-homoserine. The polypeptide is Homoserine O-acetyltransferase (Mycobacterium ulcerans (strain Agy99)).